Consider the following 696-residue polypeptide: Glycine--tRNA ligase beta subunit (696 aa).

It belongs to the class-II aminoacyl-tRNA synthetase family. As to quaternary structure, tetramer of two alpha and two beta subunits.

It localises to the cytoplasm. The enzyme catalyses tRNA(Gly) + glycine + ATP = glycyl-tRNA(Gly) + AMP + diphosphate. The protein is Glycine--tRNA ligase beta subunit of Oleidesulfovibrio alaskensis (strain ATCC BAA-1058 / DSM 17464 / G20) (Desulfovibrio alaskensis).